The chain runs to 267 residues: Beta-lactamase OXA-5 (267 aa).

An N-terminal signal peptide occupies residues 1–19; it reads MKTIAAYLVLVFYASTALS. Ser67 acts as the Acyl-ester intermediate in catalysis. Position 70 is an N6-carboxylysine (Lys70). 205-207 contacts substrate; it reads KTG.

The protein belongs to the class-D beta-lactamase family.

The enzyme catalyses a beta-lactam + H2O = a substituted beta-amino acid. Its activity is regulated as follows. Inhibited by clavulanic acid. Hydrolyzes both oxacillin and methicillin. This Pseudomonas aeruginosa protein is Beta-lactamase OXA-5 (bla).